The sequence spans 443 residues: Transcription factor E2F2 (443 aa).

The interval 1–22 (MLRAPRTLAPATAQPTKSLPAL) is disordered. The segment at 67 to 107 (ATPHGPEGQIVRCAPAGRLPAKRKLDLEGIGRPTVPEFRTP) is cyclin A/CDK2 binding. Residues 109 to 198 (GKCIRVDGLP…KNNIQWVGRE (90 aa)) mediate DNA binding. The leucine-zipper stretch occupies residues 157–178 (LNWAAEVLDVQKRRIYDITNVL). Residues 162–198 (EVLDVQKRRIYDITNVLEGIQLIRKKSKNNIQWVGRE) carry the DEF box motif. A dimerization region spans residues 199 to 291 (LFEDPTRPSR…PDRAEENLQI (93 aa)). The interval 306-341 (PEEGQEPDSPAKEALPSTSALSPIPDCAQPGCSTDS) is disordered. Residues 361 to 443 (PPPPLPPAPS…SYDLGDLLIN (83 aa)) form a transactivation region. Positions 416-433 (DEYLWGMDEGEGISDLFD) are retinoblastoma protein binding.

It belongs to the E2F/DP family. Component of the DRTF1/E2F transcription factor complex. Forms heterodimers with DP family members. The E2F2 complex binds specifically hypophosphorylated retinoblastoma protein RB1. During the cell cycle, RB1 becomes phosphorylated in mid-to-late G1 phase, detaches from the DRTF1/E2F complex, rendering E2F transcriptionally active. Viral oncoproteins, notably E1A, T-antigen and HPV E7, are capable of sequestering RB protein, thus releasing the active complex. Binds EAPP. Post-translationally, phosphorylated by CDK2 and cyclin A-CDK2 in the S-phase.

It localises to the nucleus. Functionally, transcription activator that binds DNA cooperatively with DP proteins through the E2 recognition site, 5'-TTTC[CG]CGC-3' found in the promoter region of a number of genes whose products are involved in cell cycle regulation or in DNA replication. The DRTF1/E2F complex functions in the control of cell-cycle progression from g1 to s phase. E2F2 binds specifically to RB1 in a cell-cycle dependent manner. This chain is Transcription factor E2F2 (E2f2), found in Mus musculus (Mouse).